The following is a 129-amino-acid chain: UPF0325 protein Ent638_0703 (129 aa).

It belongs to the UPF0325 family.

This Enterobacter sp. (strain 638) protein is UPF0325 protein Ent638_0703.